A 334-amino-acid chain; its full sequence is L-lactate dehydrogenase A chain (334 aa).

NAD(+) contacts are provided by residues 30-58 and arginine 100; that span reads GQVG…LEDK. The substrate site is built by arginine 107, asparagine 139, and arginine 170. Residue asparagine 139 coordinates NAD(+). Histidine 194 serves as the catalytic Proton acceptor. Threonine 249 contributes to the substrate binding site.

The protein belongs to the LDH/MDH superfamily. LDH family. Homotetramer.

Its subcellular location is the cytoplasm. The enzyme catalyses (S)-lactate + NAD(+) = pyruvate + NADH + H(+). The protein operates within fermentation; pyruvate fermentation to lactate; (S)-lactate from pyruvate: step 1/1. Functionally, interconverts simultaneously and stereospecifically pyruvate and lactate with concomitant interconversion of NADH and NAD(+). This chain is L-lactate dehydrogenase A chain (ldha), found in Xenopus laevis (African clawed frog).